Reading from the N-terminus, the 449-residue chain is GPI mannosyltransferase 2 (449 aa).

The Cytoplasmic segment spans residues 1–7; that stretch reads MTEKVTK. The chain crosses the membrane as a helical span at residues 8 to 28; the sequence is LALASRLIVLLVQLVANGALP. At 29-82 the chain is on the lumenal side; that stretch reads EHKPDVFRMPVSSDQNASWIDKVIKRCLGGLRHWDGEYFLHIAENLYSYENTLA. Asn-44 is a glycosylation site (N-linked (GlcNAc...) asparagine). The chain crosses the membrane as a helical span at residues 83 to 103; that stretch reads FYPLYPVVVRHVGQAVEAIGI. At 104 to 109 the chain is on the cytoplasmic side; sequence SLSQES. Residues 110 to 130 traverse the membrane as a helical segment; it reads ILLVVAVALNFWLFCESANLL. Over 131–148 the chain is Lumenal; that stretch reads FQLTQVLFNDLNKSWNAA. An N-linked (GlcNAc...) asparagine glycan is attached at Asn-142. The chain crosses the membrane as a helical span at residues 149–169; sequence LIYCFNPATIFFTAAYSETFF. The Cytoplasmic portion of the chain corresponds to 170-196; it reads AYSSLHLMLECSKPTGSFRYLRLGTAL. Residues 197-217 traverse the membrane as a helical segment; the sequence is AACLLCRSNGLITLGYPLYFF. The Lumenal portion of the chain corresponds to 218–235; the sequence is GRQLLLKNKEPNTCMQLT. Residues 236-256 traverse the membrane as a helical segment; that stretch reads QMTLTILGAIGILHTYYFYIY. Residues 257-368 lie on the Cytoplasmic side of the membrane; sequence RLYCLPNTRP…GFKELIRDHT (112 aa). A helical membrane pass occupies residues 369 to 389; the sequence is TFPFVLHAAILTLVCTVYVHI. At 390-423 the chain is on the lumenal side; it reads QVSTRLLASATPVFYWFAADHMPKTLAQLKLRSK. A helical membrane pass occupies residues 424–444; that stretch reads AGALFVWCTTYSLVGTVLFSN. Residues 445-449 are Cytoplasmic-facing; the sequence is NYPWT.

The protein belongs to the PIGV family.

The protein localises to the endoplasmic reticulum membrane. It participates in glycolipid biosynthesis; glycosylphosphatidylinositol-anchor biosynthesis. Functionally, mannosyltransferase involved in glycosylphosphatidylinositol-anchor biosynthesis. Transfers the second mannose to the glycosylphosphatidylinositol during GPI precursor assembly. Required for the GPI-mediated endoplasmic reticulum exit and proper targeting to the cell surface of chp. Required for GPI-mediated membrane attachment of chp, qsm and Cont. Essential for microvillar stability in the rhabdomere. This Drosophila melanogaster (Fruit fly) protein is GPI mannosyltransferase 2.